The following is a 312-amino-acid chain: Apulose-4-phosphate transketolase subunit B (312 aa).

Belongs to the transketolase family. Probable heterodimer composed of AptA and AptB. Thiamine diphosphate is required as a cofactor.

It carries out the reaction apulose 4-phosphate + D-glyceraldehyde 3-phosphate = D-xylulose 5-phosphate + dihydroxyacetone phosphate. It participates in carbohydrate metabolism. Involved in catabolism of D-apiose. Catalyzes the transfer of the glycolaldehyde group from apulose-4-phosphate to D-glyceraldehyde 3-phosphate, generating dihydroxyacetone phosphate and D-xylulose-5-phosphate. In Phocaeicola vulgatus (strain ATCC 8482 / DSM 1447 / JCM 5826 / CCUG 4940 / NBRC 14291 / NCTC 11154) (Bacteroides vulgatus), this protein is Apulose-4-phosphate transketolase subunit B.